Reading from the N-terminus, the 519-residue chain is ATP synthase subunit beta, mitochondrial (519 aa).

Residues 1 to 21 (MLTRFRSAVLRGAVSITGARA) constitute a mitochondrion transit peptide. Residues 184–191 (GAGVGKTV) and Arg216 each bind ATP.

This sequence belongs to the ATPase alpha/beta chains family. As to quaternary structure, F-type ATPases have 2 components, F(1) - the catalytic core - and F(o) - the membrane proton channel. F(1) has five subunits: alpha(3), beta(3), gamma(1), delta(1), epsilon(1), plus the additional subunit P18 (Tb427.05.1710) that is not present in F(1)F(o) ATP synthase from metazoa. Subunit P18 (Tb927.5.1710) interacts with the alpha subunit with a 1:1 stoichiometry; the interaction is direct. Subunit gamma is part of the central stalk. F(o) has three main subunits: a, b and c. The trypanosomal ATPase complex contains additional subunits that are not present in the F(1)F(o) ATP synthase from metazoa.

Its subcellular location is the mitochondrion. The protein resides in the mitochondrion inner membrane. The enzyme catalyses ATP + H2O + 4 H(+)(in) = ADP + phosphate + 5 H(+)(out). Functionally, mitochondrial membrane ATP synthase (F(1)F(o) ATP synthase) produces ATP from ADP in the presence of a proton gradient across the membrane which is generated by electron transport complexes of the respiratory chain. F-type ATPases consist of two structural domains, F(1) - containing the extramembraneous catalytic core, and F(o) - containing the membrane proton channel, linked together by a central stalk and a peripheral stalk. During catalysis, ATP synthesis in the catalytic domain of F(1) is coupled via a rotary mechanism of the central stalk subunits to proton translocation. Subunits alpha and beta form the catalytic core in F(1). Rotation of the central stalk against the surrounding alpha(3)beta(3) subunits leads to hydrolysis of ATP in three separate catalytic sites on the beta subunits. Contrary to the procyclic, insect form that requires F(1)F(o) ATP synthase for ATP synthesis, the bloodstream form relies on ATP hydrolysis by F(1)F(o) ATP synthase to maintain its mitochondrial membrane potential. In Trypanosoma brucei brucei, this protein is ATP synthase subunit beta, mitochondrial.